The sequence spans 436 residues: T-box transcription factor T (436 aa).

Positions 51-219 form a DNA-binding region, T-box; it reads LWLRFKELTN…YNPFAKAFLD (169 aa).

As to quaternary structure, monomer. Binds DNA as a monomer.

The protein resides in the nucleus. Its function is as follows. Involved in the transcriptional regulation of genes required for mesoderm formation and differentiation. Binds to a palindromic T site 5'-TTCACACCTAGGTGTGAA-3' DNA sequence and activates gene transcription when bound to such a site. The chain is T-box transcription factor T from Mus musculus (Mouse).